A 615-amino-acid chain; its full sequence is DNA mismatch repair protein MutL (615 aa).

Residues 362–397 (HFAEPAVREPVAPRYSPAPASGSRPAASWPNAQPGY) are disordered. The segment covering 373–391 (APRYSPAPASGSRPAASWP) has biased composition (low complexity).

Belongs to the DNA mismatch repair MutL/HexB family.

Its function is as follows. This protein is involved in the repair of mismatches in DNA. It is required for dam-dependent methyl-directed DNA mismatch repair. May act as a 'molecular matchmaker', a protein that promotes the formation of a stable complex between two or more DNA-binding proteins in an ATP-dependent manner without itself being part of a final effector complex. This Escherichia coli O45:K1 (strain S88 / ExPEC) protein is DNA mismatch repair protein MutL.